Consider the following 95-residue polypeptide: Integration host factor subunit beta (95 aa).

A disordered region spans residues 56 to 76 (RAPRTGRNPKTGTSVELDGKY).

This sequence belongs to the bacterial histone-like protein family. Heterodimer of an alpha and a beta chain.

Its function is as follows. This protein is one of the two subunits of integration host factor, a specific DNA-binding protein that functions in genetic recombination as well as in transcriptional and translational control. The chain is Integration host factor subunit beta from Shewanella denitrificans (strain OS217 / ATCC BAA-1090 / DSM 15013).